The sequence spans 643 residues: Protein ecdysoneless homolog (643 aa).

2 disordered regions span residues 428–458 (EFYN…NNFD) and 501–600 (IESM…FTPV). Residues 446–456 (AGSSSDANMNN) show a composition bias toward polar residues. The segment covering 528 to 543 (MDFDDVEDDSEGEESN) has biased composition (acidic residues). Positions 564–580 (NSTLEKSFENVNQQHSS) are enriched in polar residues. Residues 581–592 (KQNEESSKTRDE) show a composition bias toward basic and acidic residues.

This sequence belongs to the ECD family.

The polypeptide is Protein ecdysoneless homolog (Arabidopsis thaliana (Mouse-ear cress)).